The following is an 822-amino-acid chain: Aminopeptidase O (822 aa).

A Zn(2+)-binding site is contributed by His480. The Proton acceptor role is filled by Glu481. The Zn(2+) site is built by His484 and Glu503. The Nucleolar localization signal motif lies at 692-702; the sequence is RRPGKRQRRKR.

Belongs to the peptidase M1 family. The cofactor is Zn(2+).

It is found in the nucleus. It localises to the nucleolus. Its function is as follows. Aminopeptidase which catalyzes the hydrolysis of amino acid residues from the N-terminus of peptide or protein substrates. This is Aminopeptidase O (Aopep) from Rattus norvegicus (Rat).